Reading from the N-terminus, the 499-residue chain is U4/U6 small nuclear ribonucleoprotein Prp31 (499 aa).

A disordered region spans residues 1-43 (MSLADELLADLEEAAEEEEGGSYGEEEEEPAIEDVQEETQLDL). Positions 7 to 40 (LLADLEEAAEEEEGGSYGEEEEEPAIEDVQEETQ) are enriched in acidic residues. Coiled coils occupy residues 85–120 (EAAPEYRVIVDANNLTVEIENELNIIHKFIRDKYSK) and 181–215 (DEELERLEEACDMALELNASKHRIYEYVESRMSFI). The region spanning 215-333 (IAPNLSIIIG…IERKFDKWQE (119 aa)) is the Nop domain. The segment at 334-357 (PPPVKQVKPLPAPLDGQRKKRGGR) is disordered. The Nuclear localization signal (NLS) signature appears at 351 to 364 (RKKRGGRRYRKMKE). Phosphoserine is present on residues serine 379, serine 395, and serine 432. Position 438 is an N6-acetyllysine (lysine 438). Serine 439 is modified (phosphoserine). Threonine 440 bears the Phosphothreonine mark. Phosphoserine is present on serine 450. Threonine 455 bears the Phosphothreonine mark. Glycyl lysine isopeptide (Lys-Gly) (interchain with G-Cter in SUMO2) cross-links involve residues lysine 471 and lysine 478.

The protein belongs to the PRP31 family. As to quaternary structure, identified in the spliceosome B complex. Component of the U4/U6-U5 tri-snRNP complex composed of the U4, U6 and U5 snRNAs and at least PRPF3, PRPF4, PRPF6, PRPF8, PRPF31, SNRNP200, TXNL4A, SNRNP40, DDX23, CD2BP2, PPIH, SNU13, EFTUD2, SART1 and USP39. Interacts with a complex formed by SNU13 and U4 snRNA, but not with SNU13 or U4 snRNA alone. The complex formed by SNU13 and PRPF31 also binds U4atac snRNA, a characteristic component of specific, less abundant spliceosomal complexes. Interacts with PRPF6/U5 snRNP-associated 102 kDa protein. Component of some MLL1/MLL complex, at least composed of the core components KMT2A/MLL1, ASH2L, HCFC1/HCF1, WDR5 and RBBP5, as well as the facultative components BACC1, CHD8, E2F6, HSP70, INO80C, KANSL1, LAS1L, MAX, MCRS1, MGA, KAT8/MOF, PELP1, PHF20, PRP31, RING2, RUVB1/TIP49A, RUVB2/TIP49B, SENP3, TAF1, TAF4, TAF6, TAF7, TAF9 and TEX10. Interacts (via its NLS) with CTNNBL1. Interacts with USH1G. In terms of processing, phosphorylated by PRP4K during spliceosome assembly.

It is found in the nucleus. The protein localises to the nucleus speckle. The protein resides in the cajal body. Involved in pre-mRNA splicing as component of the spliceosome. Required for the assembly of the U4/U5/U6 tri-snRNP complex, one of the building blocks of the spliceosome. The protein is U4/U6 small nuclear ribonucleoprotein Prp31 (Prpf31) of Mus musculus (Mouse).